Consider the following 631-residue polypeptide: 1-deoxy-D-xylulose-5-phosphate synthase (631 aa).

Thiamine diphosphate contacts are provided by residues histidine 72 and 113 to 115 (GHA). Residue aspartate 144 coordinates Mg(2+). Residues 145–146 (GA), asparagine 174, tyrosine 287, and glutamate 370 each bind thiamine diphosphate. Asparagine 174 provides a ligand contact to Mg(2+).

Belongs to the transketolase family. DXPS subfamily. As to quaternary structure, homodimer. The cofactor is Mg(2+). It depends on thiamine diphosphate as a cofactor.

It carries out the reaction D-glyceraldehyde 3-phosphate + pyruvate + H(+) = 1-deoxy-D-xylulose 5-phosphate + CO2. It functions in the pathway metabolic intermediate biosynthesis; 1-deoxy-D-xylulose 5-phosphate biosynthesis; 1-deoxy-D-xylulose 5-phosphate from D-glyceraldehyde 3-phosphate and pyruvate: step 1/1. Functionally, catalyzes the acyloin condensation reaction between C atoms 2 and 3 of pyruvate and glyceraldehyde 3-phosphate to yield 1-deoxy-D-xylulose-5-phosphate (DXP). The sequence is that of 1-deoxy-D-xylulose-5-phosphate synthase from Prochlorococcus marinus (strain MIT 9515).